A 547-amino-acid polypeptide reads, in one-letter code: MANFVLPPIHDNSDGSWGPSTSTLPAQFKDIPYAPFSKSDKITRIADWHDPQAEAAAGTRTARTVQSGGRRTAYGAAEGTVFGFVHDEDEKSFSLVDSGVRVGARGKAPIRGRSVRGVASARGARGRGGQRGGFSTRGGRGGARGGYGDWNKPQRTRDSSVTIGPEWEVLEEIDFNRLSKLSLSVEDPEDLASYGTVQAYDKTFDRINTRNEKPLEIVNRVRYNPSTSDDPIISQYAEKKEAQIFATDSILAVLMCAGRSVNSWDIIIEHRNGQVFFDKRESGPLDYITVNENAADPPVDSDDVSNINSAGSLSLEATYISHNFSSQVSANSKSKAYTPNPNPFYSPEVESEPPASTLYKYRKFDLSIDEEEQFSVILRTEADAYLGKKEVLVTVKALNEYDPRVQGGSGKPLDWRKNLDTQKGAILASEMKNNSAKFARWAIQSILAGVEQMKMGYISRANPRDAQRHTIVGVQSFKPLDFARQMNVSLANGWGIVRTIADLVLKQPEGKFVLVKDPNNPLVRLYKVPDDTFEAGAEEEEEEQDEE.

2 disordered regions span residues 1 to 22 (MANF…PSTS) and 114 to 159 (SVRG…TRDS). The segment covering 126–148 (GRGGQRGGFSTRGGRGGARGGYG) has biased composition (gly residues). An RNA gate region spans residues 284–298 (PLDYITVNENAADPP).

This sequence belongs to the eIF-3 subunit D family. In terms of assembly, component of the eukaryotic translation initiation factor 3 (eIF-3) complex.

It localises to the cytoplasm. In terms of biological role, mRNA cap-binding component of the eukaryotic translation initiation factor 3 (eIF-3) complex, which is involved in protein synthesis of a specialized repertoire of mRNAs and, together with other initiation factors, stimulates binding of mRNA and methionyl-tRNAi to the 40S ribosome. The eIF-3 complex specifically targets and initiates translation of a subset of mRNAs involved in cell proliferation. In the eIF-3 complex, eif3d specifically recognizes and binds the 7-methylguanosine cap of a subset of mRNAs. In Cryptococcus neoformans var. neoformans serotype D (strain B-3501A) (Filobasidiella neoformans), this protein is Eukaryotic translation initiation factor 3 subunit D.